We begin with the raw amino-acid sequence, 245 residues long: 1-(5-phosphoribosyl)-5-[(5-phosphoribosylamino)methylideneamino] imidazole-4-carboxamide isomerase (245 aa).

The active-site Proton acceptor is D11. The active-site Proton donor is D132.

Belongs to the HisA/HisF family.

The protein resides in the cytoplasm. The enzyme catalyses 1-(5-phospho-beta-D-ribosyl)-5-[(5-phospho-beta-D-ribosylamino)methylideneamino]imidazole-4-carboxamide = 5-[(5-phospho-1-deoxy-D-ribulos-1-ylimino)methylamino]-1-(5-phospho-beta-D-ribosyl)imidazole-4-carboxamide. The protein operates within amino-acid biosynthesis; L-histidine biosynthesis; L-histidine from 5-phospho-alpha-D-ribose 1-diphosphate: step 4/9. This chain is 1-(5-phosphoribosyl)-5-[(5-phosphoribosylamino)methylideneamino] imidazole-4-carboxamide isomerase, found in Bacillus velezensis (strain DSM 23117 / BGSC 10A6 / LMG 26770 / FZB42) (Bacillus amyloliquefaciens subsp. plantarum).